The chain runs to 739 residues: Phosphoribosylformylglycinamidine synthase subunit PurL (739 aa).

Residue H54 is part of the active site. Y57 and K96 together coordinate ATP. E98 is a binding site for Mg(2+). Residues 99–102 (SHNH) and R121 contribute to the substrate site. The Proton acceptor role is filled by H100. D122 lines the Mg(2+) pocket. Q245 lines the substrate pocket. D273 lines the Mg(2+) pocket. 317–319 (ESQ) contacts substrate. The ATP site is built by D500 and G537. N538 contacts Mg(2+). S540 lines the substrate pocket.

This sequence belongs to the FGAMS family. In terms of assembly, monomer. Part of the FGAM synthase complex composed of 1 PurL, 1 PurQ and 2 PurS subunits.

It is found in the cytoplasm. It carries out the reaction N(2)-formyl-N(1)-(5-phospho-beta-D-ribosyl)glycinamide + L-glutamine + ATP + H2O = 2-formamido-N(1)-(5-O-phospho-beta-D-ribosyl)acetamidine + L-glutamate + ADP + phosphate + H(+). It participates in purine metabolism; IMP biosynthesis via de novo pathway; 5-amino-1-(5-phospho-D-ribosyl)imidazole from N(2)-formyl-N(1)-(5-phospho-D-ribosyl)glycinamide: step 1/2. Part of the phosphoribosylformylglycinamidine synthase complex involved in the purines biosynthetic pathway. Catalyzes the ATP-dependent conversion of formylglycinamide ribonucleotide (FGAR) and glutamine to yield formylglycinamidine ribonucleotide (FGAM) and glutamate. The FGAM synthase complex is composed of three subunits. PurQ produces an ammonia molecule by converting glutamine to glutamate. PurL transfers the ammonia molecule to FGAR to form FGAM in an ATP-dependent manner. PurS interacts with PurQ and PurL and is thought to assist in the transfer of the ammonia molecule from PurQ to PurL. In Bacillus cereus (strain ATCC 14579 / DSM 31 / CCUG 7414 / JCM 2152 / NBRC 15305 / NCIMB 9373 / NCTC 2599 / NRRL B-3711), this protein is Phosphoribosylformylglycinamidine synthase subunit PurL.